Here is a 271-residue protein sequence, read N- to C-terminus: Putative pyruvate, phosphate dikinase regulatory protein 2 (271 aa).

Position 151–158 (151–158 (GVSRTSKT)) interacts with ADP.

The protein belongs to the pyruvate, phosphate/water dikinase regulatory protein family. PDRP subfamily.

It carries out the reaction N(tele)-phospho-L-histidyl/L-threonyl-[pyruvate, phosphate dikinase] + ADP = N(tele)-phospho-L-histidyl/O-phospho-L-threonyl-[pyruvate, phosphate dikinase] + AMP + H(+). The enzyme catalyses N(tele)-phospho-L-histidyl/O-phospho-L-threonyl-[pyruvate, phosphate dikinase] + phosphate + H(+) = N(tele)-phospho-L-histidyl/L-threonyl-[pyruvate, phosphate dikinase] + diphosphate. In terms of biological role, bifunctional serine/threonine kinase and phosphorylase involved in the regulation of the pyruvate, phosphate dikinase (PPDK) by catalyzing its phosphorylation/dephosphorylation. The chain is Putative pyruvate, phosphate dikinase regulatory protein 2 from Staphylococcus haemolyticus (strain JCSC1435).